Consider the following 181-residue polypeptide: Photosystem I assembly protein Ycf4 (181 aa).

2 consecutive transmembrane segments (helical) span residues 19 to 39 (YFWA…GISS) and 61 to 81 (IVMM…MATL).

This sequence belongs to the Ycf4 family.

It localises to the plastid. It is found in the chloroplast thylakoid membrane. Its function is as follows. Seems to be required for the assembly of the photosystem I complex. This is Photosystem I assembly protein Ycf4 from Thalassiosira pseudonana (Marine diatom).